The chain runs to 108 residues: uncharacterized protein (108 aa).

One can recognise an HTH cro/C1-type domain in the interval 20-74; it reads VRQRRTALILDQETLARRIGVSFQQIQKYERGRNRISASRLYDIAKALAVPIDYF. The H-T-H motif DNA-binding region spans 31-50; it reads QETLARRIGVSFQQIQKYER.

This is an uncharacterized protein from Rhodospirillum rubrum.